Reading from the N-terminus, the 506-residue chain is Nostrin (506 aa).

Residues 1–260 (MRDPLTDCSY…AISKVDVEKD (260 aa)) enclose the F-BAR domain. Ser114 is subject to Phosphoserine. 2 coiled-coil regions span residues 160–230 (SLTQ…LNQY) and 305–334 (KLGR…ASSS). In terms of domain architecture, REM-1 spans 292–372 (PMDKERRKSL…SYKLSSVLAD (81 aa)). The disordered stretch occupies residues 413–435 (KAESKAPAGGQNNPSSSPSGSTV). Over residues 419–435 (PAGGQNNPSSSPSGSTV) the composition is skewed to low complexity. Positions 438–497 (ASKHLCKALYTFQARQDDELNLEKGDIVTVHEKKEEGWWFGSLKGKRGHFPAAYVEELPP) constitute an SH3 domain. Position 479 is a phosphoserine (Ser479).

Homotrimer. Interacts with NOS3, DNM2, WASL and CAV1. Interacts with DAB2. Interacts (via SH3 domain) with DNM2; this interaction allows the recruitment of NOS3 to dynamin-positive structures.

Its subcellular location is the cell membrane. The protein localises to the cytoplasmic vesicle. The protein resides in the cytoplasm. It localises to the cytoskeleton. It is found in the nucleus. In terms of biological role, multivalent adapter protein which may decrease NOS3 activity by inducing its translocation away from the plasma membrane. This chain is Nostrin, found in Mus musculus (Mouse).